The sequence spans 439 residues: Aspartate--tRNA(Asp/Asn) ligase (439 aa).

Glu-177 contributes to the L-aspartate binding site. An aspartate region spans residues 199–202 (QLYK). An L-aspartate-binding site is contributed by Arg-221. Residues 221-223 (RAE), 229-231 (RHL), and Glu-362 each bind ATP. Mg(2+) is bound by residues Glu-362 and Ser-365. Residues Ser-365 and Arg-369 each coordinate L-aspartate. Residue 410–413 (GADR) coordinates ATP.

The protein belongs to the class-II aminoacyl-tRNA synthetase family. Type 2 subfamily. In terms of assembly, homodimer. Mg(2+) is required as a cofactor.

It localises to the cytoplasm. It catalyses the reaction tRNA(Asx) + L-aspartate + ATP = L-aspartyl-tRNA(Asx) + AMP + diphosphate. In terms of biological role, aspartyl-tRNA synthetase with relaxed tRNA specificity since it is able to aspartylate not only its cognate tRNA(Asp) but also tRNA(Asn). Reaction proceeds in two steps: L-aspartate is first activated by ATP to form Asp-AMP and then transferred to the acceptor end of tRNA(Asp/Asn). This is Aspartate--tRNA(Asp/Asn) ligase from Methanosphaera stadtmanae (strain ATCC 43021 / DSM 3091 / JCM 11832 / MCB-3).